Here is a 343-residue protein sequence, read N- to C-terminus: Anthranilate phosphoribosyltransferase (343 aa).

5-phospho-alpha-D-ribose 1-diphosphate is bound by residues glycine 79, 82–83 (GD), threonine 87, 89–92 (NVST), 106–114 (KHGNRAASS), and serine 118. Glycine 79 contacts anthranilate. Mg(2+) is bound at residue serine 91. Anthranilate is bound at residue asparagine 109. Arginine 164 lines the anthranilate pocket. Mg(2+)-binding residues include aspartate 223 and glutamate 224.

Belongs to the anthranilate phosphoribosyltransferase family. In terms of assembly, homodimer. The cofactor is Mg(2+).

It carries out the reaction N-(5-phospho-beta-D-ribosyl)anthranilate + diphosphate = 5-phospho-alpha-D-ribose 1-diphosphate + anthranilate. It functions in the pathway amino-acid biosynthesis; L-tryptophan biosynthesis; L-tryptophan from chorismate: step 2/5. Catalyzes the transfer of the phosphoribosyl group of 5-phosphorylribose-1-pyrophosphate (PRPP) to anthranilate to yield N-(5'-phosphoribosyl)-anthranilate (PRA). This chain is Anthranilate phosphoribosyltransferase, found in Metallosphaera sedula (strain ATCC 51363 / DSM 5348 / JCM 9185 / NBRC 15509 / TH2).